The chain runs to 334 residues: Ornithine carbamoyltransferase subunit I (334 aa).

Carbamoyl phosphate contacts are provided by residues Ser-56 to Thr-59, Gln-83, Arg-107, and His-134 to Gln-137. Residues Asn-168, Asp-232, and Ser-236–Met-237 each bind L-ornithine. Position 274 (Cys-274) interacts with Zn(2+). Residues Cys-274–Leu-275 and Arg-320 each bind carbamoyl phosphate.

Belongs to the aspartate/ornithine carbamoyltransferase superfamily. OTCase family. In E.coli strain K12, trimer of identical or non-identical chains are composed of ArgI (I) and/or ArgF (F). The trimer has the following composition: FFI, FFF, FII, III. E.coli strains B and W, which are known to contain only ArgI, produce only a trimer of identical chains (III).

It localises to the cytoplasm. The catalysed reaction is carbamoyl phosphate + L-ornithine = L-citrulline + phosphate + H(+). The protein operates within amino-acid biosynthesis; L-arginine biosynthesis; L-arginine from L-ornithine and carbamoyl phosphate: step 1/3. Its activity is regulated as follows. Reversely inhibited by N-(N-Sulfodiaminophosphinyl)-L-ornithine. Zinc is an allosteric regulator of the substrate-bound enzyme and a competitive inhibitor of the free enzyme. Its function is as follows. Reversibly catalyzes the transfer of the carbamoyl group from carbamoyl phosphate (CP) to the N(epsilon) atom of ornithine (ORN) to produce L-citrulline, which is a substrate for argininosuccinate synthetase, the enzyme involved in the final step in arginine biosynthesis. This Escherichia coli (strain K12) protein is Ornithine carbamoyltransferase subunit I.